A 182-amino-acid polypeptide reads, in one-letter code: Constitutive photomorphogenesis protein 10 (182 aa).

Positions 36–182 (ASGKRIQREM…AKEWTLRFAK (147 aa)) constitute a UBC core domain.

The protein belongs to the ubiquitin-conjugating enzyme family. In terms of assembly, component of the CDD complex, at least composed of COP10, DET1 and DDB1A. Interacts with E3 ubiquitin ligase COP1. Interacts with E2 ubiquitin conjugating UBC5. Interacts with CSN3, CSN4 and CSN8 subunits of the COP9 complex. In terms of tissue distribution, expressed in flower, leaf, stem and seedling. Expressed at lower level in root.

It localises to the nucleus. Functionally, component of light signal transduction machinery. Involved in repression of photomorphogenesis in darkness by participating in the CDD complex, a complex probably required to regulate the activity of ubiquitin conjugating enzymes (E2s). Repression of photomorphogenesis is probably mediated by ubiquitination and subsequent degradation of photomorphogenesis-promoting factors such as HY5, HYH and LAF1. Although strongly related to ubiquitin-conjugating enzyme, it has no catalytic activity by itself due to the absence of the conserved Cys active site at position 120. It can however enhance the activity of E2 conjugating enzymes. This Arabidopsis thaliana (Mouse-ear cress) protein is Constitutive photomorphogenesis protein 10 (COP10).